Consider the following 194-residue polypeptide: MKIKTAEFVGSAFNESQYPKDKIPQIAIVGKSNVGKSTLINTVLGRKNLAKVSSTPGKTRGINFYLVNRAFYIVDLPGYGYAKVSKEMKKQWAYNIETFLNTSKNLKHALLLIDIRREPTEDDFMMVNWFSFKNLPFSVVLTKADKVNKSEANKAIENICRSFNISSDRVIVFSAVEKTGISEILRIFEEVIEK.

The 173-residue stretch at 22 to 194 (KIPQIAIVGK…LRIFEEVIEK (173 aa)) folds into the EngB-type G domain. Residues 30-37 (GKSNVGKS), 57-61 (GKTRG), 75-78 (DLPG), 142-145 (TKAD), and 173-175 (FSA) contribute to the GTP site. S37 and T59 together coordinate Mg(2+).

Belongs to the TRAFAC class TrmE-Era-EngA-EngB-Septin-like GTPase superfamily. EngB GTPase family. Requires Mg(2+) as cofactor.

In terms of biological role, necessary for normal cell division and for the maintenance of normal septation. The chain is Probable GTP-binding protein EngB from Caldanaerobacter subterraneus subsp. tengcongensis (strain DSM 15242 / JCM 11007 / NBRC 100824 / MB4) (Thermoanaerobacter tengcongensis).